Consider the following 413-residue polypeptide: Clusterin-associated protein 1 (413 aa).

Residues 185–308 (MRIAIKDLLA…KEEEKRLLKS (124 aa)) are a coiled coil. A disordered region spans residues 303 to 413 (KRLLKSGSND…EPLDESDNDF (111 aa)). Acidic residues-rich tracts occupy residues 312–328 (DDSD…DSEL) and 360–388 (DSDE…EDES). Residues Ser-314, Ser-324, and Ser-326 each carry the phosphoserine modification. Residue Ser-409 is modified to Phosphoserine.

The protein belongs to the CLUAP1 family. In terms of assembly, interacts with CLU/clusterin. Interacts with UBXN10; the interaction is direct. Expressed in all tissues tested including heart, kidney, skeletal muscle, eye, liver, ovary, oviduct, testes, lung and brain. Elevated levels in multiciliated cells such as the bronchioles of the lungs, ependymal cells of the brain and cells with a single primary cilia of heart and kidney.

Its subcellular location is the cell projection. The protein resides in the cilium. It is found in the nucleus. In terms of biological role, required for cilia biogenesis. Appears to function within the multiple intraflagellar transport complex B (IFT-B). Key regulator of hedgehog signaling. This Mus musculus (Mouse) protein is Clusterin-associated protein 1 (Cluap1).